The following is a 264-amino-acid chain: Undecaprenyl-diphosphatase (264 aa).

8 helical membrane passes run I7 to L27, L41 to A61, V89 to V109, I114 to F134, T144 to G164, I186 to I206, L219 to I239, and M244 to L264.

It belongs to the UppP family.

It is found in the cell inner membrane. It carries out the reaction di-trans,octa-cis-undecaprenyl diphosphate + H2O = di-trans,octa-cis-undecaprenyl phosphate + phosphate + H(+). Functionally, catalyzes the dephosphorylation of undecaprenyl diphosphate (UPP). Confers resistance to bacitracin. The polypeptide is Undecaprenyl-diphosphatase (Vesicomyosocius okutanii subsp. Calyptogena okutanii (strain HA)).